The chain runs to 462 residues: cAMP-dependent protein kinase regulatory subunit (462 aa).

Positions 54-203 (TPSPRFPPSP…RLKYAIEGNF (150 aa)) are dimerization and phosphorylation. The segment at 79–157 (FGANANPFGG…PTTDSYPAQY (79 aa)) is disordered. The segment covering 80 to 102 (GANANPFGGSSSNPNPFGGSASP) has biased composition (low complexity). Phosphoserine is present on Ser164. 3',5'-cyclic AMP is bound by residues 204-333 (LFSH…FLEE), Glu282, Arg291, 336-453 (ILSS…KTGV), Glu401, and Arg410.

Belongs to the cAMP-dependent kinase regulatory chain family. Tetramer, composed of 2 regulatory (R) and 2 catalytic (C) subunits. In the presence of cAMP it dissociates into 2 active monomeric C subunits and an R dimer.

The protein is cAMP-dependent protein kinase regulatory subunit (pkar1) of Hypocrea atroviridis (Trichoderma atroviride).